We begin with the raw amino-acid sequence, 81 residues long: RNA-binding protein Hfq (81 aa).

Positions 11-71 (DIFLNNARKN…ISTITPTKPI (61 aa)) constitute a Sm domain.

Belongs to the Hfq family. Homohexamer.

Functionally, RNA chaperone that binds small regulatory RNA (sRNAs) and mRNAs to facilitate mRNA translational regulation in response to envelope stress, environmental stress and changes in metabolite concentrations. Also binds with high specificity to tRNAs. This Clostridium beijerinckii (strain ATCC 51743 / NCIMB 8052) (Clostridium acetobutylicum) protein is RNA-binding protein Hfq.